The following is a 444-amino-acid chain: Probable glycine dehydrogenase (decarboxylating) subunit 1 (444 aa).

This sequence belongs to the GcvP family. N-terminal subunit subfamily. As to quaternary structure, the glycine cleavage system is composed of four proteins: P, T, L and H. In this organism, the P 'protein' is a heterodimer of two subunits.

The enzyme catalyses N(6)-[(R)-lipoyl]-L-lysyl-[glycine-cleavage complex H protein] + glycine + H(+) = N(6)-[(R)-S(8)-aminomethyldihydrolipoyl]-L-lysyl-[glycine-cleavage complex H protein] + CO2. The glycine cleavage system catalyzes the degradation of glycine. The P protein binds the alpha-amino group of glycine through its pyridoxal phosphate cofactor; CO(2) is released and the remaining methylamine moiety is then transferred to the lipoamide cofactor of the H protein. This chain is Probable glycine dehydrogenase (decarboxylating) subunit 1, found in Chlorobium luteolum (strain DSM 273 / BCRC 81028 / 2530) (Pelodictyon luteolum).